Here is a 326-residue protein sequence, read N- to C-terminus: Probable UDP-3-O-acyl-N-acetylglucosamine deacetylase 2, mitochondrial (326 aa).

A mitochondrion-targeting transit peptide spans 1-21; sequence MRLPVTVKATKPSFLVIWIRY. Zn(2+) is bound by residues histidine 109, histidine 281, and aspartate 285.

The protein belongs to the LpxC family. Zn(2+) serves as cofactor.

The protein localises to the mitochondrion. It carries out the reaction a UDP-3-O-[(3R)-3-hydroxyacyl]-N-acetyl-alpha-D-glucosamine + H2O = a UDP-3-O-[(3R)-3-hydroxyacyl]-alpha-D-glucosamine + acetate. The protein operates within glycolipid biosynthesis; lipid IV(A) biosynthesis; lipid IV(A) from (3R)-3-hydroxytetradecanoyl-[acyl-carrier-protein] and UDP-N-acetyl-alpha-D-glucosamine: step 2/6. Functionally, involved in the biosynthesis of lipid A, a phosphorylated glycolipid that in bacteria anchors the lipopolysaccharide to the outer membrane of the cell. Lipid A-like molecules in plants may serve as structural components of the outer membranes of mitochondria and/or chloroplasts, or may be involved in signal transduction or plant defense responses (Potential). This is Probable UDP-3-O-acyl-N-acetylglucosamine deacetylase 2, mitochondrial (LPXC2) from Arabidopsis thaliana (Mouse-ear cress).